We begin with the raw amino-acid sequence, 233 residues long: 6-carboxyhexanoate--CoA ligase (233 aa).

The protein belongs to the BioW family. Homodimer. The cofactor is Mg(2+).

The enzyme catalyses heptanedioate + ATP + CoA = 6-carboxyhexanoyl-CoA + AMP + diphosphate. Its pathway is metabolic intermediate metabolism; pimeloyl-CoA biosynthesis; pimeloyl-CoA from pimelate: step 1/1. Its function is as follows. Catalyzes the transformation of pimelate into pimeloyl-CoA with concomitant hydrolysis of ATP to AMP. The protein is 6-carboxyhexanoate--CoA ligase of Methanocaldococcus sp. (strain FS406-22).